A 555-amino-acid chain; its full sequence is Dihydroxy-acid dehydratase (555 aa).

Aspartate 78 is a Mg(2+) binding site. Residue cysteine 119 participates in [2Fe-2S] cluster binding. The Mg(2+) site is built by aspartate 120 and lysine 121. N6-carboxylysine is present on lysine 121. Position 195 (cysteine 195) interacts with [2Fe-2S] cluster. Glutamate 444 provides a ligand contact to Mg(2+). Residue serine 470 is the Proton acceptor of the active site.

It belongs to the IlvD/Edd family. Homodimer. The cofactor is [2Fe-2S] cluster. Mg(2+) serves as cofactor.

It carries out the reaction (2R)-2,3-dihydroxy-3-methylbutanoate = 3-methyl-2-oxobutanoate + H2O. The enzyme catalyses (2R,3R)-2,3-dihydroxy-3-methylpentanoate = (S)-3-methyl-2-oxopentanoate + H2O. The protein operates within amino-acid biosynthesis; L-isoleucine biosynthesis; L-isoleucine from 2-oxobutanoate: step 3/4. It participates in amino-acid biosynthesis; L-valine biosynthesis; L-valine from pyruvate: step 3/4. Its function is as follows. Functions in the biosynthesis of branched-chain amino acids. Catalyzes the dehydration of (2R,3R)-2,3-dihydroxy-3-methylpentanoate (2,3-dihydroxy-3-methylvalerate) into 2-oxo-3-methylpentanoate (2-oxo-3-methylvalerate) and of (2R)-2,3-dihydroxy-3-methylbutanoate (2,3-dihydroxyisovalerate) into 2-oxo-3-methylbutanoate (2-oxoisovalerate), the penultimate precursor to L-isoleucine and L-valine, respectively. The polypeptide is Dihydroxy-acid dehydratase (Dehalococcoides mccartyi (strain ATCC BAA-2266 / KCTC 15142 / 195) (Dehalococcoides ethenogenes (strain 195))).